Reading from the N-terminus, the 208-residue chain is Transmembrane protein 222 (208 aa).

The segment at 1-26 is disordered; sequence MAEAEGSSLLLLPPPPPPPRMAEVEA. Over 1–55 the chain is Extracellular; that stretch reads MAEAEGSSLLLLPPPPPPPRMAEVEAPTAAETDMKQYQGSGGVAMDVERSRFPYC. The helical transmembrane segment at 56-76 threads the bilayer; it reads VVWTPIPVLTWFFPIIGHMGI. Residues 77–164 are Cytoplasmic-facing; sequence CTSTGVIRDF…MRYNNSTNWN (88 aa). Residues 165-185 form a helical membrane-spanning segment; it reads MVTLCFFCLLYGKYVSVGAFV. Position 186 (lysine 186) is a topological domain, extracellular. A helical transmembrane segment spans residues 187–207; that stretch reads TWLPFILLLGIILTVSLVFNL. Position 208 (arginine 208) is a topological domain, cytoplasmic.

Widely expressed. The highest expression is observed in the brain.

It localises to the membrane. Its subcellular location is the cell projection. The protein resides in the dendrite. The chain is Transmembrane protein 222 (TMEM222) from Homo sapiens (Human).